The chain runs to 446 residues: Tubulin beta chain (446 aa).

8 residues coordinate GTP: Q11, E69, S138, G142, T143, G144, N204, and N226. A Mg(2+)-binding site is contributed by E69. Residues 423–446 form a disordered region; the sequence is QQYQDAGVDEEEEEYEEEPLPEDE. The segment covering 429–446 has biased composition (acidic residues); that stretch reads GVDEEEEEYEEEPLPEDE.

This sequence belongs to the tubulin family. As to quaternary structure, dimer of alpha and beta chains. A typical microtubule is a hollow water-filled tube with an outer diameter of 25 nm and an inner diameter of 15 nM. Alpha-beta heterodimers associate head-to-tail to form protofilaments running lengthwise along the microtubule wall with the beta-tubulin subunit facing the microtubule plus end conferring a structural polarity. Microtubules usually have 13 protofilaments but different protofilament numbers can be found in some organisms and specialized cells. Requires Mg(2+) as cofactor.

The protein localises to the cytoplasm. It is found in the cytoskeleton. In terms of biological role, tubulin is the major constituent of microtubules, a cylinder consisting of laterally associated linear protofilaments composed of alpha- and beta-tubulin heterodimers. Microtubules grow by the addition of GTP-tubulin dimers to the microtubule end, where a stabilizing cap forms. Below the cap, tubulin dimers are in GDP-bound state, owing to GTPase activity of alpha-tubulin. The polypeptide is Tubulin beta chain (TUBB) (Pestalotiopsis microspora).